A 262-amino-acid polypeptide reads, in one-letter code: 5'-nucleotidase SurE (262 aa).

Residues aspartate 8, aspartate 9, serine 41, and asparagine 97 each contribute to the a divalent metal cation site.

This sequence belongs to the SurE nucleotidase family. It depends on a divalent metal cation as a cofactor.

Its subcellular location is the cytoplasm. It carries out the reaction a ribonucleoside 5'-phosphate + H2O = a ribonucleoside + phosphate. Nucleotidase that shows phosphatase activity on nucleoside 5'-monophosphates. This chain is 5'-nucleotidase SurE, found in Methanococcus maripaludis (strain DSM 14266 / JCM 13030 / NBRC 101832 / S2 / LL).